A 299-amino-acid polypeptide reads, in one-letter code: Prohibitin-2 (299 aa).

Position 2 is an N-acetylalanine (Ala-2). Residues 19 to 49 (MGTALKLLLGAGAVAYGIRESVFTVEGGHRA) form a necessary for transcriptional repression region. Phosphotyrosine is present on Tyr-128. Lys-147 carries the post-translational modification N6-acetyllysine. The interval 150 to 174 (ASQLITQRAQVSLLIRRELTERAKD) is necessary for transcriptional repression. Residue Ser-151 is modified to Phosphoserine. Residues 190–238 (SREYTAAVEAKQVAQQEAQRAQFLVEKAKQEQRQKIVQAEGEAEAARML) adopt a coiled-coil conformation. N6-acetyllysine occurs at positions 200, 250, and 262.

This sequence belongs to the prohibitin family. In terms of assembly, the mitochondrial prohibitin complex consists of two subunits (PHB1 and PHB2), assembled into a membrane-associated ring-shaped supercomplex of approximately 1 mDa. Interacts with ESR1, HDAC1 and HDAC5. Interacts with ZNF703. Interacts with STOML2. Interacts with ARFGEF3. Interacts with SPHK2. Interacts with COX4I1; the interaction associates PHB2 with COX. Interacts with MAP1LC3B (membrane-bound form LC3-II); the interaction is direct and upon mitochondrial depolarization and proteasome-dependent outer membrane rupture. Interacts with IGFBP6 (via C-terminal domain). Interacts with CLPB. Interacts with CD86 (via cytoplasmic domain); the interactions increases after priming with CD40. Interacts with AFG3L2. Interacts with DNAJC19. Interacts with AKT2; this interaction may be important for myogenic differentiation. In terms of processing, phosphorylated. Tyrosine phosphorylation is indirectly stimulated by IGFBP6.

It is found in the mitochondrion inner membrane. It localises to the cytoplasm. Its subcellular location is the nucleus. The protein resides in the cell membrane. Protein with pleiotropic attributes mediated in a cell-compartment- and tissue-specific manner, which include the plasma membrane-associated cell signaling functions, mitochondrial chaperone, and transcriptional co-regulator of transcription factors and sex steroid hormones in the nucleus. Its function is as follows. In the mitochondria, together with PHB, forms large ring complexes (prohibitin complexes) in the inner mitochondrial membrane (IMM) and functions as a chaperone protein that stabilizes mitochondrial respiratory enzymes and maintains mitochondrial integrity in the IMM, which is required for mitochondrial morphogenesis, neuronal survival, and normal lifespan. The prohibitin complex, with DNAJC19, regulates cardiolipin remodeling and the protein turnover of OMA1 in a cardiolipin-binding manner. Also regulates cytochrome-c oxidase assembly (COX) and mitochondrial respiration. Binding to sphingoid 1-phosphate (SPP) modulates its regulator activity. Has a key role of mitophagy receptor involved in targeting mitochondria for autophagic degradation. Involved in mitochondrial-mediated antiviral innate immunity, activates RIG-I-mediated signal transduction and production of IFNB1 and pro-inflammatory cytokine IL6. Functionally, in the nucleus, serves as transcriptional co-regulator. Acts as a mediator of transcriptional repression by nuclear hormone receptors via recruitment of histone deacetylases. Functions as an estrogen receptor (ER)-selective coregulator that potentiates the inhibitory activities of antiestrogens and represses the activity of estrogens. Competes with NCOA1 for modulation of ER transcriptional activity. In terms of biological role, in the plasma membrane, is involved in IGFBP6-induced cell migration. Cooperates with CD86 to mediate CD86-signaling in B lymphocytes that regulates the level of IgG1 produced through the activation of distal signaling intermediates. Upon CD40 engagement, required to activate NF-kappa-B signaling pathway via phospholipase C and protein kinase C activation. This is Prohibitin-2 (PHB2) from Bos taurus (Bovine).